Reading from the N-terminus, the 177-residue chain is SPbeta prophage-derived uncharacterized protein YopI (177 aa).

The helical transmembrane segment at F11–L31 threads the bilayer.

The protein resides in the cell membrane. The chain is SPbeta prophage-derived uncharacterized protein YopI (yopI) from Bacillus subtilis (strain 168).